The chain runs to 77 residues: Serine protease inhibitor 1 (77 aa).

The first 17 residues, Met1 to Ala17, serve as a signal peptide directing secretion. Intrachain disulfides connect Cys21–Cys53, Cys30–Cys48, Cys33–Cys44, Cys37–Cys74, and Cys55–Cys68. The TIL domain occupies Cys21–Cys74.

It localises to the secreted. Its function is as follows. Defends the organism against the host's proteinases. The polypeptide is Serine protease inhibitor 1 (Anisakis simplex (Herring worm)).